Consider the following 465-residue polypeptide: Sodium-dependent phosphate transport protein 1 (465 aa).

N47 and N56 each carry an N-linked (GlcNAc...) asparagine glycan. The next 10 membrane-spanning stretches (helical) occupy residues 79 to 99, 109 to 129, 171 to 191, 198 to 218, 255 to 275, 304 to 324, 337 to 357, 363 to 383, 399 to 419, and 428 to 448; these read GIIF…VGYI, IGFA…AAAV, MSLS…GIIC, MVFY…FVLY, AMIK…YLWT, LPYL…DFLM, LFTA…LYLS, TITF…GALI, VTTL…GLFL, and FKIF…YLIF.

It belongs to the major facilitator superfamily. Sodium/anion cotransporter family. As to quaternary structure, interacts with PDZK1. In terms of tissue distribution, kidney cortex and liver.

The protein localises to the apical cell membrane. It catalyses the reaction 3 Na(+)(out) + phosphate(out) = 3 Na(+)(in) + phosphate(in). The catalysed reaction is urate(out) = urate(in). Functionally, important for the resorption of phosphate by the kidney. May be involved in actively transporting phosphate into cells via Na(+) cotransport in the renal brush border membrane. Plays a role in urate transport in the kidney. The protein is Sodium-dependent phosphate transport protein 1 (SLC17A1) of Oryctolagus cuniculus (Rabbit).